The chain runs to 309 residues: Glutamyl-Q tRNA(Asp) synthetase (309 aa).

Residues 8 to 12 (RFSPS) and E44 each bind L-glutamate. A 'HIGH' region motif is present at residues 11 to 21 (PSPTGPLHAGS). Positions 100, 102, 126, and 130 each coordinate Zn(2+). Y205 and R223 together coordinate L-glutamate. The 'KMSKS' region motif lies at 261-265 (KLSKQ). K264 lines the ATP pocket.

Belongs to the class-I aminoacyl-tRNA synthetase family. GluQ subfamily. Zn(2+) is required as a cofactor.

Its function is as follows. Catalyzes the tRNA-independent activation of glutamate in presence of ATP and the subsequent transfer of glutamate onto a tRNA(Asp). Glutamate is transferred on the 2-amino-5-(4,5-dihydroxy-2-cyclopenten-1-yl) moiety of the queuosine in the wobble position of the QUC anticodon. This chain is Glutamyl-Q tRNA(Asp) synthetase, found in Albidiferax ferrireducens (strain ATCC BAA-621 / DSM 15236 / T118) (Rhodoferax ferrireducens).